Here is a 130-residue protein sequence, read N- to C-terminus: Large ribosomal subunit protein bL20 (130 aa).

It belongs to the bacterial ribosomal protein bL20 family.

Its function is as follows. Binds directly to 23S ribosomal RNA and is necessary for the in vitro assembly process of the 50S ribosomal subunit. It is not involved in the protein synthesizing functions of that subunit. In Clavibacter michiganensis subsp. michiganensis (strain NCPPB 382), this protein is Large ribosomal subunit protein bL20.